Here is a 353-residue protein sequence, read N- to C-terminus: Protein RecA (353 aa).

74-81 contributes to the ATP binding site; it reads GPESSGKT.

This sequence belongs to the RecA family.

The protein localises to the cytoplasm. Functionally, can catalyze the hydrolysis of ATP in the presence of single-stranded DNA, the ATP-dependent uptake of single-stranded DNA by duplex DNA, and the ATP-dependent hybridization of homologous single-stranded DNAs. It interacts with LexA causing its activation and leading to its autocatalytic cleavage. This is Protein RecA from Bordetella bronchiseptica (strain ATCC BAA-588 / NCTC 13252 / RB50) (Alcaligenes bronchisepticus).